The chain runs to 336 residues: Tryptophan--tRNA ligase (336 aa).

Residues 16–18 (QPT) and 24–25 (GN) contribute to the ATP site. Positions 17 to 25 (PTGQLHLGN) match the 'HIGH' region motif. Asp140 provides a ligand contact to L-tryptophan. ATP-binding positions include 152 to 154 (GED), Val191, and 200 to 204 (KMSKS). Residues 200–204 (KMSKS) carry the 'KMSKS' region motif.

It belongs to the class-I aminoacyl-tRNA synthetase family. As to quaternary structure, homodimer.

It is found in the cytoplasm. It catalyses the reaction tRNA(Trp) + L-tryptophan + ATP = L-tryptophyl-tRNA(Trp) + AMP + diphosphate + H(+). In terms of biological role, catalyzes the attachment of tryptophan to tRNA(Trp). The chain is Tryptophan--tRNA ligase from Gloeobacter violaceus (strain ATCC 29082 / PCC 7421).